Consider the following 689-residue polypeptide: uncharacterized protein (689 aa).

It localises to the mitochondrion. This is an uncharacterized protein from Schizosaccharomyces pombe (strain 972 / ATCC 24843) (Fission yeast).